Here is a 234-residue protein sequence, read N- to C-terminus: Ubiquinone biosynthesis O-methyltransferase (234 aa).

Positions 37, 56, 77, and 121 each coordinate S-adenosyl-L-methionine.

It belongs to the methyltransferase superfamily. UbiG/COQ3 family.

The catalysed reaction is a 3-demethylubiquinol + S-adenosyl-L-methionine = a ubiquinol + S-adenosyl-L-homocysteine + H(+). The enzyme catalyses a 3-(all-trans-polyprenyl)benzene-1,2-diol + S-adenosyl-L-methionine = a 2-methoxy-6-(all-trans-polyprenyl)phenol + S-adenosyl-L-homocysteine + H(+). Its pathway is cofactor biosynthesis; ubiquinone biosynthesis. O-methyltransferase that catalyzes the 2 O-methylation steps in the ubiquinone biosynthetic pathway. This Aromatoleum aromaticum (strain DSM 19018 / LMG 30748 / EbN1) (Azoarcus sp. (strain EbN1)) protein is Ubiquinone biosynthesis O-methyltransferase.